We begin with the raw amino-acid sequence, 78 residues long: Acyl carrier protein (78 aa).

Positions 1–76 constitute a Carrier domain; it reads MALFEDIQAV…DVVKYIEDNK (76 aa). Ser36 is subject to O-(pantetheine 4'-phosphoryl)serine.

Belongs to the acyl carrier protein (ACP) family. In terms of processing, 4'-phosphopantetheine is transferred from CoA to a specific serine of apo-ACP by AcpS. This modification is essential for activity because fatty acids are bound in thioester linkage to the sulfhydryl of the prosthetic group.

It is found in the cytoplasm. It participates in lipid metabolism; fatty acid biosynthesis. Functionally, carrier of the growing fatty acid chain in fatty acid biosynthesis. The chain is Acyl carrier protein from Helicobacter pylori (strain Shi470).